Consider the following 321-residue polypeptide: Putative membrane-bound redox modulator Alx (321 aa).

Residues 1–6 lie on the Periplasmic side of the membrane; sequence MNTVGT. The chain crosses the membrane as a helical span at residues 7–27; the sequence is PLLWGGFAVVVAIMLAIDLLL. Over 28 to 43 the chain is Cytoplasmic; that stretch reads QGRRGAHAMTMKQAAA. Residues 44–64 traverse the membrane as a helical segment; sequence WSLVWVTLSLLFNAAFWWYLV. At 65-89 the chain is on the periplasmic side; that stretch reads QTEGRAVADPQALAFLTGYLIEKSL. Residues 90 to 110 form a helical membrane-spanning segment; it reads AVDNVFVWLMLFSYFSVPAAL. Topologically, residues 111–113 are cytoplasmic; it reads QRR. Residues 114-134 form a helical membrane-spanning segment; the sequence is VLVYGVLGAIVLRTIMIFTGS. Trp135 is a topological domain (periplasmic). The helical transmembrane segment at 136–156 threads the bilayer; the sequence is LISQFDWILYIFGAFLLFTGV. The Cytoplasmic segment spans residues 157 to 198; sequence KMALAHEDESGIGDKPLVRWLRGHLRMTDTIDNEHFFVRKNG. A helical membrane pass occupies residues 199–219; sequence LLYATPLMLVLILVELSDVIF. Over 220-225 the chain is Periplasmic; the sequence is AVDSIP. Residues 226 to 246 traverse the membrane as a helical segment; that stretch reads AIFAVTTDPFIVLTSNLFAIL. The Cytoplasmic portion of the chain corresponds to 247–261; the sequence is GLRAMYFLLAGVAER. Residues 262-282 form a helical membrane-spanning segment; that stretch reads FSMLKYGLAVILVFIGIKMLI. Residues 283 to 286 lie on the Periplasmic side of the membrane; that stretch reads VDFY. Residues 287 to 307 form a helical membrane-spanning segment; the sequence is HIPIAVSLGVVFGILVMTFII. The Cytoplasmic portion of the chain corresponds to 308-321; it reads NAWVNYRHDKQRVG.

This sequence belongs to the TerC family.

Its subcellular location is the cell inner membrane. Has been proposed to be a redox modulator. The chain is Putative membrane-bound redox modulator Alx (alx) from Escherichia coli O157:H7.